We begin with the raw amino-acid sequence, 373 residues long: Meiosis-specific kinetochore protein (373 aa).

Disordered stretches follow at residues 1-91 (MWPL…QDEK) and 250-276 (STPE…LTST). Residues 77-91 (SLQENRSSEDTQDEK) show a composition bias toward basic and acidic residues. The POLO box domain (PBD)-binding signature appears at 275 to 277 (STP). The segment at 332–335 (EICC) is required for localization to kinetochores.

As to quaternary structure, interacts with CENPC. Interacts with PLK1; required for recruitment of PLK1 at kinetochores.

The protein resides in the chromosome. The protein localises to the centromere. Its subcellular location is the kinetochore. In terms of biological role, key regulator of kinetochore function during meiosis I: required both for mono-orientation of kinetochores on sister chromosomes and protection of centromeric cohesin from separase-mediated cleavage. Acts by facilitating kinetochore mono-orientation during meiosis I, when kinetochores on sister chromosomes face the same direction and are thus captured and pulled by spindle fibers from the same pole. Also required to prevent cleavage of cohesin at centromeres during meiosis I, possibly by acting as a regulator of the shugoshin-dependent protection pathway. Acts in collaboration with PLK1: required for PLK1 enrichment to kinetochores. Not required during meiosis II or mitosis. The chain is Meiosis-specific kinetochore protein from Homo sapiens (Human).